Consider the following 816-residue polypeptide: Cation/H(+) antiporter 8 (816 aa).

12 helical membrane-spanning segments follow: residues 64–84 (PKLE…NILF), 97–117 (MMLA…NSII), 127–147 (IDVA…LKGV), 163–183 (VTGV…FNLK), 197–214 (VMLL…ARLL), 227–247 (VALS…IANV), 255–275 (ADGL…FAVV), 297–317 (IHGV…LSQF), 343–363 (LESF…MLRT), 382–402 (FAVA…SVIV), 413–433 (SIIL…FYLF), and 447–467 (ILVL…GFLY).

The protein belongs to the monovalent cation:proton antiporter 2 (CPA2) transporter (TC 2.A.37) family. CHX (TC 2.A.37.4) subfamily. In terms of tissue distribution, specifically expressed in pollen.

It is found in the membrane. Its function is as follows. May operate as a cation/H(+) antiporter. In Arabidopsis thaliana (Mouse-ear cress), this protein is Cation/H(+) antiporter 8 (CHX8).